A 757-amino-acid polypeptide reads, in one-letter code: Glutathione biosynthesis bifunctional protein GshAB (757 aa).

A glutamate--cysteine ligase region spans residues Met1–Ala337. An ATP-grasp domain is found at Lys494–Phe753. Ala521–Arg580 serves as a coordination point for ATP. Mg(2+)-binding residues include Asp702, Glu723, and Asn725. The Mn(2+) site is built by Asp702, Glu723, and Asn725.

In the N-terminal section; belongs to the glutamate--cysteine ligase type 1 family. Type 2 subfamily. In terms of assembly, monomer. Mg(2+) is required as a cofactor. Mn(2+) serves as cofactor.

The enzyme catalyses L-cysteine + L-glutamate + ATP = gamma-L-glutamyl-L-cysteine + ADP + phosphate + H(+). It carries out the reaction gamma-L-glutamyl-L-cysteine + glycine + ATP = glutathione + ADP + phosphate + H(+). It participates in sulfur metabolism; glutathione biosynthesis; glutathione from L-cysteine and L-glutamate: step 1/2. Its pathway is sulfur metabolism; glutathione biosynthesis; glutathione from L-cysteine and L-glutamate: step 2/2. Functionally, synthesizes glutathione from L-glutamate and L-cysteine via gamma-L-glutamyl-L-cysteine. The polypeptide is Glutathione biosynthesis bifunctional protein GshAB (Pasteurella multocida (strain Pm70)).